A 485-amino-acid chain; its full sequence is Sperm-associated antigen 8 (485 aa).

3 disordered regions span residues 1-42, 75-98, and 127-215; these read METN…SPRS, KTPA…EPCA, and TTTD…CIPP. Over residues 132 to 150 the composition is skewed to low complexity; that stretch reads SSNPGPVPGSSSGPVLGSS. Over residues 151–191 the composition is skewed to gly residues; the sequence is SGAGHGSGSGSGPGCGSVPGSGSGPGPGSGPGSGPGHGSGS. 2 mn regions span residues 327–340 and 379–393; these read SSTT…PPGN and ESVT…LAQA.

This sequence belongs to the SPAG8 family. In terms of assembly, microtubule inner protein component of sperm flagellar doublet microtubules. Interacts with FHL5 (via second LIM domain). Interacts with RANBP9. In terms of tissue distribution, expressed in testis (germ cells), but not in liver, kidney, prostate and small intestine. Expressed in airway epithelial cells.

It is found in the cytoplasm. The protein resides in the nucleus. It localises to the cytoplasmic vesicle. Its subcellular location is the secretory vesicle. The protein localises to the acrosome. It is found in the cytoskeleton. The protein resides in the microtubule organizing center. It localises to the spindle. Its subcellular location is the cilium axoneme. The protein localises to the flagellum axoneme. Its function is as follows. Microtubule inner protein (MIP) part of the dynein-decorated doublet microtubules (DMTs) in cilia axoneme, which is required for motile cilia beating. Plays a role in spermatogenesis by enhancing the binding of CREM isoform tau to its coactivator FHL5 and increasing the FHL5-regulated transcriptional activation of CREM isoform tau. Involved in the acrosome reaction and in binding of sperm to the zona pellucida. Plays a role in regulation of the cell cycle by controlling progression through the G2/M phase, possibly by delaying the activation of CDK1 which is required for entry into mitosis. May play a role in fertility and microtubule formation through interaction with RANBP9. The polypeptide is Sperm-associated antigen 8 (Homo sapiens (Human)).